Here is a 738-residue protein sequence, read N- to C-terminus: Ethylene receptor 1 (738 aa).

3 helical membrane-spanning segments follow: residues 23-43 (ISDFFIAIAYFSIPLELIYFV), 53-73 (WVLVQFGAFIVLCGATHLINL), and 92-112 (VLTAVVSCATALMLVHIIPDL). Residues cysteine 65 and histidine 69 each contribute to the Cu cation site. The GAF domain occupies 158–307 (DRHTILKTTL…VVADQVAVAL (150 aa)). In terms of domain architecture, Histidine kinase spans 350 to 585 (VMNHEMRTPM…IFDVKLGISE (236 aa)). Histidine 353 is modified (phosphohistidine; by autocatalysis). ADP contacts are provided by residues 470-473 (NAVK), aspartate 513, lysine 529, serine 544, and leucine 548. A Response regulatory domain is found at 611-729 (KVLVMDENGV…NIRDVLSDLL (119 aa)). Aspartate 659 bears the 4-aspartylphosphate mark. Residue lysine 714 forms a Glycyl lysine isopeptide (Lys-Gly) (interchain with G-Cter in ubiquitin) linkage.

This sequence belongs to the ethylene receptor family. In terms of assembly, homodimer; disulfide-linked. Heteromer with ERS1, ERS2, ETR2 and EIN4. Interacts with AHP1, AHP2 and AHP3. Interacts with RTE1. Interacts with EIN2. Requires Cu cation as cofactor. In terms of processing, autophosphorylated. Phosphorylation at His-353 modulates the interaction with EIN2. As to expression, leaves, roots, stems, seedlings, flowers, anthers, carpels and ovules.

Its subcellular location is the endoplasmic reticulum membrane. It catalyses the reaction ATP + protein L-histidine = ADP + protein N-phospho-L-histidine.. Its function is as follows. Ethylene receptor related to bacterial two-component regulators. Acts as a redundant negative regulator of ethylene signaling. In the presence of ethylene, the auto-kinase activity of ETR1 is inhibited and the non-phosphorylated kinase domain binds tightly to the corresponding domain of EIN2. The protein is Ethylene receptor 1 of Arabidopsis thaliana (Mouse-ear cress).